We begin with the raw amino-acid sequence, 494 residues long: Serine/threonine-protein kinase cst-1 (494 aa).

Residues 1–27 are disordered; that stretch reads MPPSTDSSRRNSEEGFSDGFKLDSSAL. A Protein kinase domain is found at 35–286; the sequence is FDIVGKLGEG…ALRLCEHTFI (252 aa). ATP contacts are provided by residues 41 to 49 and Lys-64; that span reads LGEGSYGSV. The active-site Proton acceptor is the Asp-154. Residues 364-413 form a disordered region; the sequence is IPKSAYGSSRNNGSPRVQPPGHTASACDPSNNPPFAEEGTGPNFQIGTSE. A compositionally biased stretch (polar residues) spans 369 to 378; that stretch reads YGSSRNNGSP. Positions 443–490 constitute an SARAH domain; it reads FEFLRNITLDELIRRKESLDSEMEEEIRELQRRYKTKRQPILDVIEIK.

The protein belongs to the protein kinase superfamily. STE Ser/Thr protein kinase family. STE20 subfamily. Mg(2+) serves as cofactor. In terms of processing, proteolytically cleaved by caspase-3 during apoptosis which results in kinase activation.

The catalysed reaction is L-seryl-[protein] + ATP = O-phospho-L-seryl-[protein] + ADP + H(+). It carries out the reaction L-threonyl-[protein] + ATP = O-phospho-L-threonyl-[protein] + ADP + H(+). Serine/threonine-protein kinase which extends lifespan and delays tissue aging, probably by activating daf-16. This Caenorhabditis briggsae protein is Serine/threonine-protein kinase cst-1 (cst-1).